Consider the following 147-residue polypeptide: Cytochrome c-type biogenesis protein CcmE (147 aa).

Over 1–7 (MTVRQRR) the chain is Cytoplasmic. Residues 8-28 (FAMVILVVIGVSIATGLGLKA) traverse the membrane as a helical; Signal-anchor for type II membrane protein segment. Residues 29–147 (FQENILFFYN…KTKANTEDKL (119 aa)) are Periplasmic-facing. Heme-binding residues include His-123 and Tyr-127.

The protein belongs to the CcmE/CycJ family.

It is found in the cell inner membrane. Heme chaperone required for the biogenesis of c-type cytochromes. Transiently binds heme delivered by CcmC and transfers the heme to apo-cytochromes in a process facilitated by CcmF and CcmH. In Nitrosococcus oceani (strain ATCC 19707 / BCRC 17464 / JCM 30415 / NCIMB 11848 / C-107), this protein is Cytochrome c-type biogenesis protein CcmE.